A 544-amino-acid polypeptide reads, in one-letter code: Dihydrolipoyllysine-residue acetyltransferase component of pyruvate dehydrogenase complex (544 aa).

Lipoyl-binding domains lie at 1–76 and 113–188; these read MYEF…VTID and IYDF…VLIG. 2 positions are modified to N6-lipoyllysine: Lys42 and Lys154. In terms of domain architecture, Peripheral subunit-binding (PSBD) spans 242–279; the sequence is LASPVARKLASDLGVDIATIKGSGEQGRVMKDDVQNSK. Residue His516 is part of the active site.

It belongs to the 2-oxoacid dehydrogenase family. Forms a 24-polypeptide structural core with octahedral symmetry. It depends on (R)-lipoate as a cofactor.

It carries out the reaction N(6)-[(R)-dihydrolipoyl]-L-lysyl-[protein] + acetyl-CoA = N(6)-[(R)-S(8)-acetyldihydrolipoyl]-L-lysyl-[protein] + CoA. Functionally, the pyruvate dehydrogenase complex catalyzes the overall conversion of pyruvate to acetyl-CoA and CO(2). It contains multiple copies of three enzymatic components: pyruvate dehydrogenase (E1), dihydrolipoamide acetyltransferase (E2) and lipoamide dehydrogenase (E3). The polypeptide is Dihydrolipoyllysine-residue acetyltransferase component of pyruvate dehydrogenase complex (pdhC) (Acholeplasma laidlawii).